An 82-amino-acid polypeptide reads, in one-letter code: MLSDEEREAFRQQAAAQQMSLSNWLRQAGLRQLEAQRQRPLRTAQELREFFASRPDETGAEPDWQAHLQVMAESRRRGLPAP.

Putative antitoxin component of a possible type II toxin-antitoxin (TA) system. The cognate toxin is VapC23. This chain is Putative antitoxin VapB23 (vapB23), found in Mycobacterium tuberculosis (strain ATCC 25618 / H37Rv).